A 134-amino-acid polypeptide reads, in one-letter code: SNAPIN protein homolog (134 aa).

Positions 50 to 124 form a coiled coil; that stretch reads QLQAELRGQL…EKEQRRRQAL (75 aa).

It belongs to the SNAPIN family. As to quaternary structure, component of the biogenesis of lysosome-related organelles complex-1 (BLOC-1) composed of Blos1, Blos2, Blos3, Blos4, Dysb, Muted, Pldn and Snapin. Interacts with Blos2 and Dysb.

The protein resides in the membrane. The protein localises to the cytoplasm. It is found in the cytosol. In terms of biological role, component of the biogenesis of lysosome-related organelles complex-1 (BLOC-1) involved in pigment granule biogenesis. May participate in the coupling of lysosomes to microtubule plus-end-directed kinesin motor. In Drosophila melanogaster (Fruit fly), this protein is SNAPIN protein homolog.